We begin with the raw amino-acid sequence, 263 residues long: Undecaprenyl-diphosphatase 2 (263 aa).

8 consecutive transmembrane segments (helical) span residues 17–37 (TEFL…LIGF), 42–62 (AKVF…VIFW), 83–103 (LHII…HSAI), 106–126 (VLFG…LMIV), 142–162 (ITYK…WPGF), 183–203 (AEYT…LDLI), 216–236 (LFAT…VSFL), and 242–262 (VKLT…YFFI).

This sequence belongs to the UppP family.

Its subcellular location is the cell membrane. It catalyses the reaction di-trans,octa-cis-undecaprenyl diphosphate + H2O = di-trans,octa-cis-undecaprenyl phosphate + phosphate + H(+). Its function is as follows. Catalyzes the dephosphorylation of undecaprenyl diphosphate (UPP). Confers resistance to bacitracin. The protein is Undecaprenyl-diphosphatase 2 of Bacillus anthracis.